The following is a 228-amino-acid chain: Orotate phosphoribosyltransferase (228 aa).

Residue Lys-26 participates in 5-phospho-alpha-D-ribose 1-diphosphate binding. An orotate-binding site is contributed by 34 to 35 (FF). 5-phospho-alpha-D-ribose 1-diphosphate-binding positions include 72 to 73 (YK), Arg-98, Lys-99, Lys-102, His-104, and 123 to 131 (DDVISAGTS). 2 residues coordinate orotate: Ser-127 and Arg-155.

Belongs to the purine/pyrimidine phosphoribosyltransferase family. PyrE subfamily. In terms of assembly, homodimer. Mg(2+) is required as a cofactor.

The enzyme catalyses orotidine 5'-phosphate + diphosphate = orotate + 5-phospho-alpha-D-ribose 1-diphosphate. Its pathway is pyrimidine metabolism; UMP biosynthesis via de novo pathway; UMP from orotate: step 1/2. In terms of biological role, catalyzes the transfer of a ribosyl phosphate group from 5-phosphoribose 1-diphosphate to orotate, leading to the formation of orotidine monophosphate (OMP). In Nitrosospira multiformis (strain ATCC 25196 / NCIMB 11849 / C 71), this protein is Orotate phosphoribosyltransferase.